Reading from the N-terminus, the 203-residue chain is Small ribosomal subunit protein uS4 (203 aa).

Positions 93 to 153 (RRFDNVVFRA…PKSKNMSAVS (61 aa)) constitute an S4 RNA-binding domain.

The protein belongs to the universal ribosomal protein uS4 family. As to quaternary structure, part of the 30S ribosomal subunit. Contacts protein S5. The interaction surface between S4 and S5 is involved in control of translational fidelity.

One of the primary rRNA binding proteins, it binds directly to 16S rRNA where it nucleates assembly of the body of the 30S subunit. Functionally, with S5 and S12 plays an important role in translational accuracy. The sequence is that of Small ribosomal subunit protein uS4 from Chlorobium phaeovibrioides (strain DSM 265 / 1930) (Prosthecochloris vibrioformis (strain DSM 265)).